The sequence spans 326 residues: Centriolar satellite-associated tubulin polyglutamylase complex regulator 1 (326 aa).

The required for interaction with PCM1 stretch occupies residues 1 to 111 (MLSPERLALP…HCLLQLLCPD (111 aa)). The tract at residues 1 to 225 (MLSPERLALP…SCPPPALVKE (225 aa)) is required for interaction with TPGS1, LRRC49, and TTLL1.

It belongs to the CSTPP1 family. In terms of assembly, interacts with PCM1. Interacts with TTLL1, TPGS1, TPGS2 and LRRC49; the interactions link CSTPP1 to the complex TPGC. Binds to alpha-tubulin.

Its subcellular location is the cytoplasm. It is found in the cytoskeleton. The protein localises to the microtubule organizing center. It localises to the centrosome. The protein resides in the centriolar satellite. In terms of biological role, regulator of the tubulin polyglutamylase complex (TPGC) that controls cytoskeletal organization, nuclear shape, and cilium disassembly by balancing microtubule and actin assembly. Regulates the assembly and stability of the TPGC and thereby modulates polyglutamylation of the microtubule, which antagonizes MAP4 binding. This chain is Centriolar satellite-associated tubulin polyglutamylase complex regulator 1 (CSTPP1), found in Bos taurus (Bovine).